The sequence spans 92 residues: UPF0213 protein M28_Spy1146 (92 aa).

A GIY-YIG domain is found at 4-80 (KKAYMYVLEC…KRKTRSQKLA (77 aa)).

It belongs to the UPF0213 family.

The sequence is that of UPF0213 protein M28_Spy1146 from Streptococcus pyogenes serotype M28 (strain MGAS6180).